The primary structure comprises 210 residues: dITP/XTP pyrophosphatase (210 aa).

Serine 16–lysine 21 serves as a coordination point for substrate. Aspartate 79 serves as the catalytic Proton acceptor. Position 79 (aspartate 79) interacts with Mg(2+). Residues serine 80, phenylalanine 166–aspartate 169, lysine 189, and histidine 194–arginine 195 contribute to the substrate site.

This sequence belongs to the HAM1 NTPase family. As to quaternary structure, homodimer. Requires Mg(2+) as cofactor.

The catalysed reaction is XTP + H2O = XMP + diphosphate + H(+). It catalyses the reaction dITP + H2O = dIMP + diphosphate + H(+). It carries out the reaction ITP + H2O = IMP + diphosphate + H(+). Functionally, pyrophosphatase that catalyzes the hydrolysis of nucleoside triphosphates to their monophosphate derivatives, with a high preference for the non-canonical purine nucleotides XTP (xanthosine triphosphate), dITP (deoxyinosine triphosphate) and ITP. Seems to function as a house-cleaning enzyme that removes non-canonical purine nucleotides from the nucleotide pool, thus preventing their incorporation into DNA/RNA and avoiding chromosomal lesions. The protein is dITP/XTP pyrophosphatase of Acinetobacter baylyi (strain ATCC 33305 / BD413 / ADP1).